We begin with the raw amino-acid sequence, 867 residues long: MSERAADDVRGEPRRAAGGAAAARQQQQQPQPLQPQRQHPPLRRPRAEDGGTGDTTTSAAAMATVGERRPLPSPEAMLGQSWNLWVEASKLPGKDGTELDESFKEFGKNREVMGLCREDMPIFGLCPAHDDFYLVVCNDCNQVVKPQAFQSHYERRHSSSSKPALAVPHTSVFSLLPSLSKSKGSGAGGSSRPPSGGVLCASSSSKLLRLPKEKLPLRGNMKPMHPVQQIKVPHGRVMTPSVKVEKMHPKMDGTLLKSTVGPACPATMSSAVKPGLNCPSIPKPTLPSPGQILNGKGLPAMPTLEKKSEDSSNNRKFLNKRLSEREFDPDIHCGVIDLDTKKPCTRSLTCKTHSLTQRRAVQGRRKRFDVLLAEHKNKAREKELIRHDSQQVPHPLRDPHPTPPRTPQEPQLPAESKPFLASKPKPQTPSLPRPPGCPAQQGGSTPIDPPPGQESPHPPLPATEPASRLSSEEGEGDDREESVEKLDCHYSGRHPQPASFCTFGSRQIGRGYYVFDSRWNRLRCALNLMVEKHLNAQLWKKIPPVPCTTSPVSARVPHRTNSVPTSQGGISYLAATTVSAPPVLLSSTCISPNSKSVPAHGTTLNAQPAGSGAMDPVCSVQSRQVSASSSPPSTPSGLSSVPSSPLSRKPQKWKPSKSIRPKESSALSTNCHNASSSTSGGSGKKRKNSSPLLVPSSSSSSSSSSSSSHSVNSFRKNCVAHSGTPYLSTAPSSHSIGLNCVTNKTHSVSLRHEQAGRGPAGVSSAEPIKRMSVMVNSSDSTLSLGPFIHQASELPVNPHSHTPLDKLIGKKRKCSPGSSTVGNSGSKPTKVAKLPAMNNVHMKHTGNISGAQGLTNNSLLHQPKARP.

Residues 1-15 are compositionally biased toward basic and acidic residues; that stretch reads MSERAADDVRGEPRR. The tract at residues 1-59 is disordered; that stretch reads MSERAADDVRGEPRRAAGGAAAARQQQQQPQPLQPQRQHPPLRRPRAEDGGTGDTTTSA. Residues 16–39 show a composition bias toward low complexity; that stretch reads AAGGAAAARQQQQQPQPLQPQRQH. N6-acetyllysine is present on lysine 222. Residue lysine 243 forms a Glycyl lysine isopeptide (Lys-Gly) (interchain with G-Cter in SUMO); alternate linkage. Residue lysine 243 forms a Glycyl lysine isopeptide (Lys-Gly) (interchain with G-Cter in SUMO2); alternate linkage. An SCA7 domain is found at 320-387; sequence KRLSEREFDP…KAREKELIRH (68 aa). A compositionally biased stretch (basic and acidic residues) spans 379-400; that stretch reads AREKELIRHDSQQVPHPLRDPH. 3 disordered regions span residues 379–483, 600–711, and 845–867; these read AREK…EESV, HGTT…SHSV, and TGNI…KARP. Composition is skewed to pro residues over residues 426-437 and 447-462; these read PQTPSLPRPPGC and IDPP…PLPA. Residues 472–481 show a composition bias toward acidic residues; that stretch reads EEGEGDDREE. Residues 619–647 show a composition bias toward low complexity; sequence SVQSRQVSASSSPPSTPSGLSSVPSSPLS. Residues 649-659 show a composition bias toward basic residues; sequence KPQKWKPSKSI. Over residues 665-674 the composition is skewed to polar residues; the sequence is SALSTNCHNA. Low complexity predominate over residues 689 to 711; the sequence is SSPLLVPSSSSSSSSSSSSSHSV. Positions 846–860 are enriched in polar residues; it reads GNISGAQGLTNNSLL.

The protein belongs to the ataxin-7 family. As to quaternary structure, component of the SAGA transcription coactivator-HAT complex, at least composed of SUPT3H, GCN5L2, TAF5L, TAF6L, SUPT7L, TADA3L, TAD1L, TAF10, TAF12, TRRAP, TAF9 and ATXN7. The STAGA core complex is associated with a subcomplex required for histone deubiquitination composed of ATXN7L3, ENY2 and USP22. Interacts with SORBS1, PSMC1 and CRX. Interacts with TRRAP, GCN5L2 and TAF10. Interacts with alpha tubulin. In terms of processing, proteolytically cleaved by caspase-7 (CASP7). Sumoylation has no effect on subcellular location or interaction with components of the STAGA complex. In terms of tissue distribution, widely expressed in adult tissues, with the highest expression in heart, brain, liver and kidney.

The protein resides in the nucleus. It localises to the nucleolus. Its subcellular location is the nucleus matrix. It is found in the cytoplasm. The protein localises to the cytoskeleton. Its function is as follows. Acts as a component of the SAGA (aka STAGA) transcription coactivator-HAT complex. Mediates the interaction of SAGA complex with the CRX and is involved in CRX-dependent gene activation. Probably involved in tethering the deubiquitination module within the SAGA complex. Necessary for microtubule cytoskeleton stabilization. Involved in neurodegeneration. The chain is Ataxin-7 (Atxn7) from Mus musculus (Mouse).